Consider the following 185-residue polypeptide: Anaphase-promoting complex subunit 10 (185 aa).

Threonine 2 carries the N-acetylthreonine modification. A DOC domain is found at 2 to 185 (TTPNKTPPGA…IDFMMYRSIR (184 aa)). Lysine 169 carries the post-translational modification N6-acetyllysine.

This sequence belongs to the APC10 family. The mammalian APC/C is composed at least of 14 distinct subunits ANAPC1, ANAPC2, CDC27/APC3, ANAPC4, ANAPC5, CDC16/APC6, ANAPC7, CDC23/APC8, ANAPC10, ANAPC11, CDC26/APC12, ANAPC13, ANAPC15 and ANAPC16 that assemble into a complex of at least 19 chains with a combined molecular mass of around 1.2 MDa; APC/C interacts with FZR1 and FBXO5. The C-terminus of APC10 binds to CDC27/APC3. Interacts with PIWIL1; interaction only takes place when PIWIL1 binds piRNA. Interacts with FBXO43; the interaction is direct.

It functions in the pathway protein modification; protein ubiquitination. In terms of biological role, component of the anaphase promoting complex/cyclosome (APC/C), a cell cycle-regulated E3 ubiquitin ligase that controls progression through mitosis and the G1 phase of the cell cycle. The APC/C complex acts by mediating ubiquitination and subsequent degradation of target proteins: it mainly mediates the formation of 'Lys-11'-linked polyubiquitin chains and, to a lower extent, the formation of 'Lys-48'- and 'Lys-63'-linked polyubiquitin chains. The APC/C complex catalyzes assembly of branched 'Lys-11'-/'Lys-48'-linked branched ubiquitin chains on target proteins. The protein is Anaphase-promoting complex subunit 10 (ANAPC10) of Homo sapiens (Human).